The chain runs to 236 residues: Probable transcriptional regulatory protein UUR10_0292 (236 aa).

Belongs to the TACO1 family.

The protein resides in the cytoplasm. The chain is Probable transcriptional regulatory protein UUR10_0292 from Ureaplasma urealyticum serovar 10 (strain ATCC 33699 / Western).